A 317-amino-acid chain; its full sequence is Bile salt hydrolase/transferase (317 aa).

Cys-2 acts as the Nucleophile; acyl-thioester intermediate in catalysis. Deoxycholate is bound by residues Cys-2 and Arg-18. Asn-82 contributes to the taurine binding site.

The protein belongs to the peptidase C59 family. In terms of assembly, homotetramer. The tetramer consists of a dimer of dimers.

The catalysed reaction is glycocholate + H2O = cholate + glycine. The enzyme catalyses glycodeoxycholate + H2O = deoxycholate + glycine. It catalyses the reaction chenodeoxycholate + glycine = glycochenodeoxycholate + H2O. It carries out the reaction cholate + taurine = taurocholate + H2O. The catalysed reaction is taurodeoxycholate + H2O = deoxycholate + taurine. The enzyme catalyses taurochenodeoxycholate + H2O = chenodeoxycholate + taurine. It catalyses the reaction an L-alpha-amino acid + cholate = an N-choloyl-L-alpha-amino acid + H2O. It carries out the reaction an L-alpha-amino acid + taurocholate = an N-choloyl-L-alpha-amino acid + taurine. The catalysed reaction is cholate + L-alanine = L-alanocholate + H2O. The enzyme catalyses taurocholate + L-alanine = L-alanocholate + taurine. It catalyses the reaction cholate + L-serine = L-serocholate + H2O. It carries out the reaction taurocholate + L-serine = L-serocholate + taurine. The catalysed reaction is cholate + L-histidine = L-histidocholate + H2O. The enzyme catalyses taurocholate + L-histidine = L-histidocholate + taurine. It functions in the pathway lipid metabolism; bile acid biosynthesis. With respect to regulation, hydrolase activity is competitively inhibited by the products cholate (CA) and deoxycholate (DCA), and by phenylacetate and 4-aminophenylacetate. Penicillin V and penicillin G show mixed inhibition. Strongly inhibited by thiol enzyme inhibitors in vitro. Possesses dual functions in bile acid metabolism. Acts as a bile salt hydrolase that catalyzes the deconjugation of glycine- and taurine-linked bile salts, which occurs naturally in the intestines of humans, releasing amino acid residues and deconjugated bile salts (bile acids). Can hydrolyze the amide bond in all six major human conjugated bile salts, namely glycocholate (GCA), glycodeoxycholate (GDCA), glycochenodeoxycholate (GCDCA), taurocholate (TCA), taurodeoxycholate (TDCA) and taurochenodeoxycholate (TCDCA). Shows a slight preference for glycine-conjugated bile acids as substrates. Also acts as an amine N-acyltransferase that conjugates a wide variety of amino acids to conjugated and non-conjugated bile acids, thus producing bacterial bile acid amidates (BBAAs) - also named microbially conjugated bile acids (MCBAs) - in the gastrointestinal tract. These BBAAs may facilitate communication between the microbiota and host through the activation of human ligand-activated transcription factors. Is totally inactive toward penicillin V. In Bifidobacterium longum, this protein is Bile salt hydrolase/transferase.